Here is a 131-residue protein sequence, read N- to C-terminus: Glycine cleavage system H protein (131 aa).

The region spanning 24–106 (TLRVGITDYA…YGEGWLVDLQ (83 aa)) is the Lipoyl-binding domain. An N6-lipoyllysine modification is found at Lys65.

Belongs to the GcvH family. The glycine cleavage system is composed of four proteins: P, T, L and H. (R)-lipoate serves as cofactor.

In terms of biological role, the glycine cleavage system catalyzes the degradation of glycine. The H protein shuttles the methylamine group of glycine from the P protein to the T protein. The chain is Glycine cleavage system H protein from Mycobacterium sp. (strain JLS).